Here is a 446-residue protein sequence, read N- to C-terminus: Exopolygalacturonase (446 aa).

Residues 1–17 form the signal peptide; that stretch reads MRVTDIISCALLQASIA. N-linked (GlcNAc...) asparagine glycans are attached at residues Asn-53, Asn-118, Asn-134, and Asn-204. One copy of the PbH1 1 repeat lies at 236–257; that stretch reads SDNIIIQNSNINNGDDCVSFKP. Asp-250 serves as the catalytic Proton donor. A disulfide bridge links Cys-252 with Cys-269. Asn-258 and Asn-270 each carry an N-linked (GlcNAc...) asparagine glycan. 3 PbH1 repeats span residues 259-279, 290-311, and 332-353; these read STNILVQNLVCNGSHGISVGS, VENILVRNISMSNASDGARIKV, and VRNVTYDGMIVKNVDYAIEITQ. His-273 is a catalytic residue. N-linked (GlcNAc...) asparagine glycans are attached at residues Asn-297, Asn-302, Asn-334, Asn-359, and Asn-369. PbH1 repeat units follow at residues 367-398 and 403-434; these read PSNLTISDITIKNFKGTTSKKYDPRVGYVVCS and CSDISIENIDVKSPSGTNLFTCANAEGIQSQV. 2 disulfides stabilise this stretch: Cys-397-Cys-403 and Cys-424-Cys-436. The N-linked (GlcNAc...) asparagine glycan is linked to Asn-435.

This sequence belongs to the glycosyl hydrolase 28 family.

The protein localises to the secreted. The catalysed reaction is [(1-&gt;4)-alpha-D-galacturonosyl](n) + H2O = alpha-D-galacturonate + [(1-&gt;4)-alpha-D-galacturonosyl](n-1). Its function is as follows. Hydrolysis of 1,4-alpha-D-galactosiduronic linkages in pectate and other galacturonans. This chain is Exopolygalacturonase (PGX1), found in Cochliobolus carbonum (Maize leaf spot fungus).